We begin with the raw amino-acid sequence, 567 residues long: MFLPTTREEMKKLGWRELDVILVTGDAYVDHPSFGVALIGHYLVSHGFKVGIIAQPDWRTEKDITRLGRPRLFFGVTAGNVDSMVANYTASKKKRKTDDYTPGGSGGKRPDRATIVYTNLIKRFFPEVPVVLGGLEASLRRFAHYDWWSEKVRKSILIDSKVDLLVYGMGEKAVLEIAQILSRTGDIEKCKSVRGVVWWSSQKPEGGIELPSYDEISENPEKYAEALKLQTWYTDPYKNILIYQKQDTRYVVQNPPQLPLSQEELDRLYLLPFEREVHPFYAKMGRVKAIETVKFSITAVRGCFGSCSFCALTQHQTTHVSYRSKDSILEEVRILTKKKDFKGTITDVGGPTANLYGSSCSIRETKGQCQKFCLYPSVCKIVRPNHDEFISLLESIRKIPGVRNVFVSSGIRHDFVLAEKDPDVFIRELVKYTPGQLKLAPEHAHPKVLSLMRKPPVELFLEFKRRFETLAKKIGKRKYVIGYFIVGHPGEGWRENNYLRDFILKHLGYFPQQIQIFTPTPGTVSTAMYYSGLDPFTGEKVHVERSLKVRNKMKENVLFKKKGREKR.

Positions Lys288–Lys560 constitute a Radical SAM core domain. Residues Cys303, Cys307, and Cys310 each coordinate [4Fe-4S] cluster.

It belongs to the UPF0313 family. Requires [4Fe-4S] cluster as cofactor.

This chain is UPF0313 protein Tpet_0582, found in Thermotoga petrophila (strain ATCC BAA-488 / DSM 13995 / JCM 10881 / RKU-1).